The following is a 310-amino-acid chain: MGSTAPLRLPVIDLSMKNLKPGTTSWNSVRTQVREALEEYGCFEAVIDAVSPELQKAVCNKGHELLNLPLETKMLNGNKPEYDGFTSIPNLNEGMGVGRITDLEKVERFTNLMWPEGNKDFCETVYSYGKRMAEVDHILKMMVFESFGMEKHFDSFCESTNYLLHFMRYQQPGKDGRSPALSLHKDKSILTIVNQNDVKGLEFETKDGEWILPTADNHIVLLGDCFMAWSNGRLHSPLHRVTLVANQARLSTSSFSFPKDIIETPAELVDEEHPLLFNPFEITELLAYCFTKEGAKAVCDLKQYKAYTGA.

Residues 159 to 258 (STNYLLHFMR…RLSTSSFSFP (100 aa)) form the Fe2OG dioxygenase domain. Residues histidine 184, aspartate 186, and histidine 239 each contribute to the Fe cation site. Arginine 249 contacts 2-oxoglutarate.

It belongs to the iron/ascorbate-dependent oxidoreductase family. Fe(2+) serves as cofactor. In terms of tissue distribution, mostly expressed in leaves and stems.

It carries out the reaction (-)-yatein + 2-oxoglutarate + O2 = (-)-deoxypodophyllotoxin + succinate + CO2 + H2O. Its pathway is aromatic compound metabolism; phenylpropanoid biosynthesis. 2-oxoglutarate-dependent dioxygenase involved in the biosynthesis of etoposide, a chemotherapeutic compound of the topoisomerase inhibitor family. Catalyzes the conversion of yatein to deoxypodophyllotoxin. Can also use, to some extent, demethylyatein as substrate. This is Deoxypodophyllotoxin synthase from Sinopodophyllum hexandrum (Himalayan may apple).